The chain runs to 218 residues: Eukaryotic translation initiation factor 3 subunit K (218 aa).

Positions 44 to 205 constitute a PCI domain; the sequence is YDWGANLAVL…NIKTKNITEK (162 aa).

It belongs to the eIF-3 subunit K family. As to quaternary structure, component of the eukaryotic translation initiation factor 3 (eIF-3) complex.

It is found in the cytoplasm. Functionally, component of the eukaryotic translation initiation factor 3 (eIF-3) complex, which is involved in protein synthesis of a specialized repertoire of mRNAs and, together with other initiation factors, stimulates binding of mRNA and methionyl-tRNAi to the 40S ribosome. The eIF-3 complex specifically targets and initiates translation of a subset of mRNAs involved in cell proliferation. In Bombyx mori (Silk moth), this protein is Eukaryotic translation initiation factor 3 subunit K.